Consider the following 899-residue polypeptide: Protein suppressor of hairy wing (899 aa).

3 disordered regions span residues 1-33, 45-127, and 171-206; these read MSAQ…RTGT, AAVA…KKMD, and AKEN…AKRR. Positions 21–31 are enriched in basic and acidic residues; it reads SDGDKPKEKRT. Residues 45-55 are compositionally biased toward low complexity; sequence AAVASKGASVS. Composition is skewed to polar residues over residues 67 to 83 and 102 to 111; these read KILN…STKG and RSSAPASSAV. Positions 183-198 are enriched in acidic residues; it reads VDEDDDDDDDDEDEGV. A C2H2-type 1; atypical zinc finger spans residues 218–240; that stretch reads HVCGKCYKTFRRVKSLKKHLEFC. Residues 288–311 form a C2H2-type 2 zinc finger; it reads INCPDCPKSFKTQTSYERHIFITH. The C2H2-type 3; atypical zinc finger occupies 318 to 340; it reads YPCSICNAKLRSGALLKLHEQQH. C2H2-type zinc fingers lie at residues 347–365, 379–401, 412–434, 440–462, 468–490, 496–518, 522–544, 552–576, and 594–617; these read FACK…LKCH, MSCK…LKQH, YMCH…IRTH, FDCD…RRYH, YTCT…MKRH, HKCN…SKTH, YACS…VKDH, FACT…AGDH, and TDCA…RSVH. Disordered stretches follow at residues 646–665, 702–734, and 865–899; these read EQKE…GSLI, PLEG…VVKK, and GDED…ESEA. Residues 874-899 are compositionally biased toward basic and acidic residues; that stretch reads ETDKGKDREADNTDTDTREDAVESEA.

It localises to the nucleus. Its function is as follows. Component of the gypsy chromatin insulator complex which is required for the function of the gypsy chromatin insulator and other endogenous chromatin insulators. Chromatin insulators are regulatory elements which establish independent domains of transcriptional activity within eukaryotic genomes. Insulators have two defining properties; they can block the communication between an enhancer and a promoter when placed between them and can also buffer transgenes from position effect variegation (PEV). Insulators are proposed to structure the chromatin fiber into independent domains of differing transcriptional potential by promoting the formation of distinct chromatin loops. This chromatin looping may involve the formation of insulator bodies, where homotypic interactions between individual subunits of the insulator complex could promote the clustering of widely spaced insulators at the nuclear periphery. Within the gypsy insulator complex, this protein binds specifically to a region of the gypsy element located 3' of the 5' long terminal repeat (LTR), and may also mediate interaction with other endogenous insulators at sites distinct from those recognized by Cp190. Cooperates with pita and cliff to recruit Cp190 and regulate insulator function at the front-ultraabdominal (Fub) boundary. The sequence is that of Protein suppressor of hairy wing (su(Hw)) from Drosophila virilis (Fruit fly).